Here is a 342-residue protein sequence, read N- to C-terminus: Cathepsin B-like cysteine proteinase 2 (342 aa).

An N-terminal signal peptide occupies residues 1–18 (MKYLVLALCTYLCSQSGA). Positions 19–86 (DENAAQGIPL…VKEDPDPEVD (68 aa)) are cleaved as a propeptide — activation peptide. An N-linked (GlcNAc...) asparagine glycan is attached at N99. 6 disulfide bridges follow: C100-C128, C111-C156, C147-C214, C148-C152, C185-C218, and C193-C205. C114 is a catalytic residue. An N-linked (GlcNAc...) asparagine glycan is attached at N138. N-linked (GlcNAc...) asparagine glycosylation is present at N198. The active site involves H285. Residue N296 is glycosylated (N-linked (GlcNAc...) asparagine). Residue N305 is part of the active site.

Belongs to the peptidase C1 family.

Functionally, expression of the protease correlates with blood-feeding and suggests a role for the protease in blood digestion. The chain is Cathepsin B-like cysteine proteinase 2 (AC-2) from Haemonchus contortus (Barber pole worm).